A 158-amino-acid polypeptide reads, in one-letter code: uncharacterized protein (158 aa).

Positions 1 to 26 (MRASRSPPSPRRCHHHHEATGAASGA) are disordered.

This is an uncharacterized protein from Homo sapiens (Human).